Consider the following 243-residue polypeptide: 3-deoxy-manno-octulosonate cytidylyltransferase (243 aa).

It belongs to the KdsB family.

It is found in the cytoplasm. The catalysed reaction is 3-deoxy-alpha-D-manno-oct-2-ulosonate + CTP = CMP-3-deoxy-beta-D-manno-octulosonate + diphosphate. The protein operates within nucleotide-sugar biosynthesis; CMP-3-deoxy-D-manno-octulosonate biosynthesis; CMP-3-deoxy-D-manno-octulosonate from 3-deoxy-D-manno-octulosonate and CTP: step 1/1. It functions in the pathway bacterial outer membrane biogenesis; lipopolysaccharide biosynthesis. In terms of biological role, activates KDO (a required 8-carbon sugar) for incorporation into bacterial lipopolysaccharide in Gram-negative bacteria. The protein is 3-deoxy-manno-octulosonate cytidylyltransferase of Helicobacter pylori (strain J99 / ATCC 700824) (Campylobacter pylori J99).